We begin with the raw amino-acid sequence, 949 residues long: Bifunctional glutamine synthetase adenylyltransferase/adenylyl-removing enzyme (949 aa).

Residues 1–450 (MQNQGNKVLS…HFNATVGGTD (450 aa)) are adenylyl removase. Residues 455–949 (NDHWTALFWN…IEIYNEILAI (495 aa)) are adenylyl transferase.

It belongs to the GlnE family. It depends on Mg(2+) as a cofactor.

The enzyme catalyses [glutamine synthetase]-O(4)-(5'-adenylyl)-L-tyrosine + phosphate = [glutamine synthetase]-L-tyrosine + ADP. The catalysed reaction is [glutamine synthetase]-L-tyrosine + ATP = [glutamine synthetase]-O(4)-(5'-adenylyl)-L-tyrosine + diphosphate. Involved in the regulation of glutamine synthetase GlnA, a key enzyme in the process to assimilate ammonia. When cellular nitrogen levels are high, the C-terminal adenylyl transferase (AT) inactivates GlnA by covalent transfer of an adenylyl group from ATP to specific tyrosine residue of GlnA, thus reducing its activity. Conversely, when nitrogen levels are low, the N-terminal adenylyl removase (AR) activates GlnA by removing the adenylyl group by phosphorolysis, increasing its activity. The regulatory region of GlnE binds the signal transduction protein PII (GlnB) which indicates the nitrogen status of the cell. The chain is Bifunctional glutamine synthetase adenylyltransferase/adenylyl-removing enzyme from Shewanella frigidimarina (strain NCIMB 400).